A 97-amino-acid polypeptide reads, in one-letter code: High mobility group protein homolog NHP1 (97 aa).

The segment at 1 to 24 is disordered; the sequence is MAGASDRTGVRRPRKAKKDPNAPK. Residues 23–93 constitute a DNA-binding region (HMG box); that stretch reads PKRALSSYMF…RYEREKAEYA (71 aa).

Its subcellular location is the nucleus. This chain is High mobility group protein homolog NHP1, found in Babesia bovis.